A 293-amino-acid polypeptide reads, in one-letter code: Protease HtpX (293 aa).

The next 2 helical transmembrane spans lie at 4–24 (ISLF…VLSL) and 33–53 (AGLM…SLLM). A Zn(2+)-binding site is contributed by H139. E140 is an active-site residue. A Zn(2+)-binding site is contributed by H143. The next 2 helical transmembrane spans lie at 158-178 (VVNT…AGFM) and 193-213 (LVYF…ASII). A Zn(2+)-binding site is contributed by E222.

Belongs to the peptidase M48B family. Zn(2+) is required as a cofactor.

The protein resides in the cell inner membrane. The polypeptide is Protease HtpX (Sodalis glossinidius (strain morsitans)).